Consider the following 69-residue polypeptide: uncharacterized protein (69 aa).

The N-terminal stretch at 1–19 is a signal peptide; sequence MKRIWVSLMIAITACSAHA.

This is an uncharacterized protein from Pasteurella multocida (strain Pm70).